The primary structure comprises 46 residues: Esculentin-1SEb (46 aa).

A disulfide bridge connects residues C40 and C46.

As to expression, expressed by the skin glands.

The protein resides in the secreted. In terms of biological role, mast cell degranulating peptide. Causes histamine release from rat peritoneal mast cells in vitro. Has antibacterial activity against the Gram-negative bacterium E.coli K12 and Gram-positive bacterium M.luteus NCT C2665. This chain is Esculentin-1SEb, found in Lithobates sevosus (Dusky gopher frog).